The sequence spans 322 residues: Phosphatidylserine decarboxylase proenzyme (322 aa).

Residues Asp-90, His-147, and Ser-254 each act as charge relay system; for autoendoproteolytic cleavage activity in the active site. The active-site Schiff-base intermediate with substrate; via pyruvic acid; for decarboxylase activity is the Ser-254. Ser-254 carries the pyruvic acid (Ser); by autocatalysis modification. A disordered region spans residues 297-322 (PAPLPAEEIKAEHDASPLVDNKKDDT). Over residues 303–322 (EEIKAEHDASPLVDNKKDDT) the composition is skewed to basic and acidic residues.

This sequence belongs to the phosphatidylserine decarboxylase family. PSD-B subfamily. Prokaryotic type I sub-subfamily. As to quaternary structure, heterodimer of a large membrane-associated beta subunit and a small pyruvoyl-containing alpha subunit. It depends on pyruvate as a cofactor. In terms of processing, is synthesized initially as an inactive proenzyme. Formation of the active enzyme involves a self-maturation process in which the active site pyruvoyl group is generated from an internal serine residue via an autocatalytic post-translational modification. Two non-identical subunits are generated from the proenzyme in this reaction, and the pyruvate is formed at the N-terminus of the alpha chain, which is derived from the carboxyl end of the proenzyme. The autoendoproteolytic cleavage occurs by a canonical serine protease mechanism, in which the side chain hydroxyl group of the serine supplies its oxygen atom to form the C-terminus of the beta chain, while the remainder of the serine residue undergoes an oxidative deamination to produce ammonia and the pyruvoyl prosthetic group on the alpha chain. During this reaction, the Ser that is part of the protease active site of the proenzyme becomes the pyruvoyl prosthetic group, which constitutes an essential element of the active site of the mature decarboxylase.

Its subcellular location is the cell membrane. The catalysed reaction is a 1,2-diacyl-sn-glycero-3-phospho-L-serine + H(+) = a 1,2-diacyl-sn-glycero-3-phosphoethanolamine + CO2. Its pathway is phospholipid metabolism; phosphatidylethanolamine biosynthesis; phosphatidylethanolamine from CDP-diacylglycerol: step 2/2. In terms of biological role, catalyzes the formation of phosphatidylethanolamine (PtdEtn) from phosphatidylserine (PtdSer). This Salmonella typhi protein is Phosphatidylserine decarboxylase proenzyme.